Here is a 122-residue protein sequence, read N- to C-terminus: Small ribosomal subunit protein uS13 (122 aa).

Positions 99–122 (RGQRTHTNARTRKGPAKAIAGKKK) are disordered.

This sequence belongs to the universal ribosomal protein uS13 family. Part of the 30S ribosomal subunit. Forms a loose heterodimer with protein S19. Forms two bridges to the 50S subunit in the 70S ribosome.

Its function is as follows. Located at the top of the head of the 30S subunit, it contacts several helices of the 16S rRNA. In the 70S ribosome it contacts the 23S rRNA (bridge B1a) and protein L5 of the 50S subunit (bridge B1b), connecting the 2 subunits; these bridges are implicated in subunit movement. Contacts the tRNAs in the A and P-sites. This is Small ribosomal subunit protein uS13 from Sinorhizobium fredii (strain NBRC 101917 / NGR234).